Here is a 286-residue protein sequence, read N- to C-terminus: Polyamine aminopropyltransferase (286 aa).

Residues 5-238 (TMWHETLHDQ…GIMTFAWATD (234 aa)) form the PABS domain. Residue Gln33 coordinates S-methyl-5'-thioadenosine. Positions 64 and 88 each coordinate spermidine. S-methyl-5'-thioadenosine is bound by residues Glu108 and 140 to 141 (DG). The active-site Proton acceptor is the Asp158. Position 158–161 (158–161 (DCTD)) interacts with spermidine. Pro165 provides a ligand contact to S-methyl-5'-thioadenosine.

This sequence belongs to the spermidine/spermine synthase family. As to quaternary structure, homodimer or homotetramer.

It localises to the cytoplasm. The catalysed reaction is S-adenosyl 3-(methylsulfanyl)propylamine + putrescine = S-methyl-5'-thioadenosine + spermidine + H(+). It functions in the pathway amine and polyamine biosynthesis; spermidine biosynthesis; spermidine from putrescine: step 1/1. In terms of biological role, catalyzes the irreversible transfer of a propylamine group from the amino donor S-adenosylmethioninamine (decarboxy-AdoMet) to putrescine (1,4-diaminobutane) to yield spermidine. The polypeptide is Polyamine aminopropyltransferase (Salmonella newport (strain SL254)).